A 162-amino-acid chain; its full sequence is Beta-lactoglobulin (162 aa).

3 cysteine pairs are disulfide-bonded: Cys66/Cys160, Cys106/Cys119, and Cys106/Cys121.

It belongs to the calycin superfamily. Lipocalin family. Under physiological conditions beta-lactoglobulin exists as an equilibrium mixture of monomeric and dimeric forms. In terms of processing, alternate disulfide bonds occur in equal amounts.

Its subcellular location is the secreted. In terms of biological role, lactoglobulin is the primary component of whey, it binds retinol and is probably involved in the transport of that molecule. The chain is Beta-lactoglobulin (LGB) from Ovis aries musimon (Mouflon).